A 91-amino-acid polypeptide reads, in one-letter code: Small ribosomal subunit protein uS17 (91 aa).

This sequence belongs to the universal ribosomal protein uS17 family. In terms of assembly, part of the 30S ribosomal subunit.

Its function is as follows. One of the primary rRNA binding proteins, it binds specifically to the 5'-end of 16S ribosomal RNA. The protein is Small ribosomal subunit protein uS17 of Salinispora tropica (strain ATCC BAA-916 / DSM 44818 / JCM 13857 / NBRC 105044 / CNB-440).